We begin with the raw amino-acid sequence, 94 residues long: CRISPR-associated endoribonuclease Cas2 (94 aa).

Asp10 is a Mg(2+) binding site.

This sequence belongs to the CRISPR-associated endoribonuclease Cas2 protein family. Homodimer, forms a heterotetramer with a Cas1 homodimer. It depends on Mg(2+) as a cofactor.

Its function is as follows. CRISPR (clustered regularly interspaced short palindromic repeat), is an adaptive immune system that provides protection against mobile genetic elements (viruses, transposable elements and conjugative plasmids). CRISPR clusters contain sequences complementary to antecedent mobile elements and target invading nucleic acids. CRISPR clusters are transcribed and processed into CRISPR RNA (crRNA). Functions as a ssRNA-specific endoribonuclease. Involved in the integration of spacer DNA into the CRISPR cassette. The chain is CRISPR-associated endoribonuclease Cas2 from Leptospira interrogans serogroup Icterohaemorrhagiae serovar Lai (strain 56601).